The primary structure comprises 129 residues: Small ribosomal subunit protein uS8c (129 aa).

It belongs to the universal ribosomal protein uS8 family. As to quaternary structure, part of the 30S ribosomal subunit.

The protein localises to the plastid. It localises to the chloroplast. Its function is as follows. One of the primary rRNA binding proteins, it binds directly to 16S rRNA central domain where it helps coordinate assembly of the platform of the 30S subunit. The sequence is that of Small ribosomal subunit protein uS8c (rps8) from Oltmannsiellopsis viridis (Marine flagellate).